Reading from the N-terminus, the 313-residue chain is Hsp90 co-chaperone Cdc37-like 1 (313 aa).

This sequence belongs to the CDC37 family. As to quaternary structure, forms complexes with Hsp70 and Hsp90.

Its subcellular location is the cytoplasm. Its function is as follows. Co-chaperone that binds to numerous proteins and promotes their interaction with Hsp70 and Hsp90. The polypeptide is Hsp90 co-chaperone Cdc37-like 1 (cdc37l1) (Danio rerio (Zebrafish)).